A 208-amino-acid polypeptide reads, in one-letter code: Phosphoribosyl-dephospho-CoA transferase (208 aa).

Active-site residues include Asp133 and Asp135.

Belongs to the MdcG family.

It carries out the reaction apo-[malonate decarboxylase ACP] + 2'-(5''-triphospho-alpha-D-ribosyl)-3'-dephospho-CoA = holo-[malonate decarboxylase ACP] + diphosphate. Transfers 2'-(5-triphosphoribosyl)-3'-dephosphocoenzyme-A to the apo-[acyl-carrier-protein] of the malonate decarboxylase to yield holo-[acyl-carrier-protein]. The protein is Phosphoribosyl-dephospho-CoA transferase of Pseudomonas fluorescens (strain ATCC BAA-477 / NRRL B-23932 / Pf-5).